The primary structure comprises 60 residues: Insect toxin mu-NPTX-Nc1a (60 aa).

The N-terminal stretch at 1–19 (MIYQVVLLLLVSPAPVSAA) is a signal peptide.

Contains 4 disulfide bonds. As to expression, expressed by the venom gland.

It localises to the secreted. Its function is as follows. Insect-specific toxin. Blocks voltage-gated potassium and sodium channels. The polypeptide is Insect toxin mu-NPTX-Nc1a (Trichonephila clavata (Joro spider)).